The chain runs to 602 residues: Beta-(1--&gt;2)glucan export ATP-binding/permease protein NdvA (602 aa).

An ABC transmembrane type-1 domain is found at 21-306 (GWLLAFANLL…VVSFINNVFM (286 aa)). The next 6 membrane-spanning stretches (helical) occupy residues 22–42 (WLLA…PVLF), 63–83 (FLAA…LVAL), 141–161 (EHFA…YLNW), 163–183 (LAIL…FVVR), 240–262 (VLSW…VLAI), and 280–300 (IVMF…VVSF). Positions 340 to 573 (VEFNDVTFSY…GGHFAELARA (234 aa)) constitute an ABC transporter domain. 373-380 (GPTGAGKS) provides a ligand contact to ATP.

The protein belongs to the ABC transporter superfamily. Beta-(1--&gt;2)glucan exporter (TC 3.A.1.108.1) family. Homodimer.

The protein resides in the cell inner membrane. The catalysed reaction is [(1-&gt;2)-beta-D-glucosyl](n)(in) + ATP + H2O = [(1-&gt;2)-beta-D-glucosyl](n)(out) + ADP + phosphate + H(+). Its function is as follows. Involved in beta-(1--&gt;2)glucan export. Transmembrane domains (TMD) form a pore in the inner membrane and the ATP-binding domain (NBD) is responsible for energy generation. This chain is Beta-(1--&gt;2)glucan export ATP-binding/permease protein NdvA, found in Bradyrhizobium diazoefficiens (strain JCM 10833 / BCRC 13528 / IAM 13628 / NBRC 14792 / USDA 110).